A 167-amino-acid polypeptide reads, in one-letter code: Large ribosomal subunit protein uL10 (167 aa).

It belongs to the universal ribosomal protein uL10 family. In terms of assembly, part of the ribosomal stalk of the 50S ribosomal subunit. The N-terminus interacts with L11 and the large rRNA to form the base of the stalk. The C-terminus forms an elongated spine to which L12 dimers bind in a sequential fashion forming a multimeric L10(L12)X complex.

Forms part of the ribosomal stalk, playing a central role in the interaction of the ribosome with GTP-bound translation factors. The protein is Large ribosomal subunit protein uL10 of Yersinia enterocolitica serotype O:8 / biotype 1B (strain NCTC 13174 / 8081).